We begin with the raw amino-acid sequence, 191 residues long: Potassium-transporting ATPase KdpC subunit (191 aa).

Residues 11 to 31 (LFVLLTAVTGVVYPLAVTGIA) traverse the membrane as a helical segment.

The protein belongs to the KdpC family. The system is composed of three essential subunits: KdpA, KdpB and KdpC.

It is found in the cell inner membrane. Functionally, part of the high-affinity ATP-driven potassium transport (or Kdp) system, which catalyzes the hydrolysis of ATP coupled with the electrogenic transport of potassium into the cytoplasm. This subunit acts as a catalytic chaperone that increases the ATP-binding affinity of the ATP-hydrolyzing subunit KdpB by the formation of a transient KdpB/KdpC/ATP ternary complex. The sequence is that of Potassium-transporting ATPase KdpC subunit from Dechloromonas aromatica (strain RCB).